The following is a 165-amino-acid chain: Protein-export protein SecB (165 aa).

It belongs to the SecB family. Homotetramer, a dimer of dimers. One homotetramer interacts with 1 SecA dimer.

Its subcellular location is the cytoplasm. One of the proteins required for the normal export of preproteins out of the cell cytoplasm. It is a molecular chaperone that binds to a subset of precursor proteins, maintaining them in a translocation-competent state. It also specifically binds to its receptor SecA. The chain is Protein-export protein SecB from Colwellia psychrerythraea (strain 34H / ATCC BAA-681) (Vibrio psychroerythus).